The following is a 404-amino-acid chain: S-adenosylmethionine synthase (404 aa).

Residues 1 to 13 show a composition bias toward polar residues; that stretch reads MSQSRYFFTSESV. The interval 1–20 is disordered; the sequence is MSQSRYFFTSESVSEGHPDK. ATP is bound at residue H17. A Mg(2+)-binding site is contributed by D19. E45 contacts K(+). The L-methionine site is built by E58 and Q101. The segment at 101–111 is flexible loop; the sequence is QSPDINRGVDR. ATP is bound by residues 172 to 174, 245 to 246, D254, 260 to 261, A277, and K281; these read DAK, RF, and RK. D254 is a binding site for L-methionine. K285 lines the L-methionine pocket.

Belongs to the AdoMet synthase family. As to quaternary structure, homotetramer; dimer of dimers. The cofactor is Mg(2+). K(+) is required as a cofactor.

It is found in the cytoplasm. It catalyses the reaction L-methionine + ATP + H2O = S-adenosyl-L-methionine + phosphate + diphosphate. The protein operates within amino-acid biosynthesis; S-adenosyl-L-methionine biosynthesis; S-adenosyl-L-methionine from L-methionine: step 1/1. Catalyzes the formation of S-adenosylmethionine (AdoMet) from methionine and ATP. The overall synthetic reaction is composed of two sequential steps, AdoMet formation and the subsequent tripolyphosphate hydrolysis which occurs prior to release of AdoMet from the enzyme. This is S-adenosylmethionine synthase from Chlorobium limicola (strain DSM 245 / NBRC 103803 / 6330).